An 81-amino-acid polypeptide reads, in one-letter code: Defensin-like protein 311 (81 aa).

An N-terminal signal peptide occupies residues 1 to 24 (MEKISAFFVILFLVSSCLVTMSVG). 3 cysteine pairs are disulfide-bonded: C27–C50, C33–C57, and C41–C59.

The protein belongs to the DEFL family.

Its subcellular location is the secreted. The protein is Defensin-like protein 311 of Arabidopsis thaliana (Mouse-ear cress).